The following is a 421-amino-acid chain: O-glycoside alpha-1,2-mannosyltransferase homolog 5 (421 aa).

Glu-318 serves as the catalytic Nucleophile.

The protein belongs to the glycosyltransferase 15 family.

It is found in the cytoplasm. Probable mannosyltransferase involved in O-glycosylation of cell wall and secreted proteins. The sequence is that of O-glycoside alpha-1,2-mannosyltransferase homolog 5 (omh5) from Schizosaccharomyces pombe (strain 972 / ATCC 24843) (Fission yeast).